A 253-amino-acid chain; its full sequence is Triosephosphate isomerase (253 aa).

9 to 11 contacts substrate; sequence NWK. H97 acts as the Electrophile in catalysis. E169 functions as the Proton acceptor in the catalytic mechanism. Substrate-binding positions include G175, S215, and 236–237; that span reads GG.

It belongs to the triosephosphate isomerase family. In terms of assembly, homodimer.

It localises to the cytoplasm. The enzyme catalyses D-glyceraldehyde 3-phosphate = dihydroxyacetone phosphate. Its pathway is carbohydrate biosynthesis; gluconeogenesis. The protein operates within carbohydrate degradation; glycolysis; D-glyceraldehyde 3-phosphate from glycerone phosphate: step 1/1. Involved in the gluconeogenesis. Catalyzes stereospecifically the conversion of dihydroxyacetone phosphate (DHAP) to D-glyceraldehyde-3-phosphate (G3P). This Staphylococcus saprophyticus subsp. saprophyticus (strain ATCC 15305 / DSM 20229 / NCIMB 8711 / NCTC 7292 / S-41) protein is Triosephosphate isomerase.